Here is an 853-residue protein sequence, read N- to C-terminus: DNA mismatch repair protein MutS (853 aa).

614–621 (GPNMGGKS) contributes to the ATP binding site.

It belongs to the DNA mismatch repair MutS family.

This protein is involved in the repair of mismatches in DNA. It is possible that it carries out the mismatch recognition step. This protein has a weak ATPase activity. The protein is DNA mismatch repair protein MutS of Escherichia coli O157:H7 (strain EC4115 / EHEC).